An 871-amino-acid polypeptide reads, in one-letter code: Nonsense-mediated mRNA decay factor SMG8 (871 aa).

Residues 541–596 form a disordered region; it reads LDDMELPESLQQSYTSSEDSSEDDDDFAIQTASSEDSLSGSDSYARPGSRRDEFES. A compositionally biased stretch (low complexity) spans 573-583; it reads SSEDSLSGSDS.

This sequence belongs to the SMG8 family.

Its function is as follows. Involved in nonsense-mediated decay (NMD) of mRNAs containing premature stop codons. Probable component of kinase complex containing smg-1 and recruited to stalled ribosomes. The polypeptide is Nonsense-mediated mRNA decay factor SMG8 (smg-8) (Caenorhabditis briggsae).